The chain runs to 442 residues: D-serine dehydratase (442 aa).

Residue Lys-118 is modified to N6-(pyridoxal phosphate)lysine.

This sequence belongs to the serine/threonine dehydratase family. DsdA subfamily. Monomer. It depends on pyridoxal 5'-phosphate as a cofactor.

The catalysed reaction is D-serine = pyruvate + NH4(+). This Escherichia coli O157:H7 protein is D-serine dehydratase.